The chain runs to 118 residues: Large ribosomal subunit protein bL19 (118 aa).

Belongs to the bacterial ribosomal protein bL19 family.

In terms of biological role, this protein is located at the 30S-50S ribosomal subunit interface and may play a role in the structure and function of the aminoacyl-tRNA binding site. The polypeptide is Large ribosomal subunit protein bL19 (Campylobacter lari (strain RM2100 / D67 / ATCC BAA-1060)).